The sequence spans 267 residues: L-aspartate dehydrogenase (267 aa).

NAD(+)-binding residues include Ala124 and Asn190. His220 is a catalytic residue.

The protein belongs to the L-aspartate dehydrogenase family.

The catalysed reaction is L-aspartate + NADP(+) + H2O = oxaloacetate + NH4(+) + NADPH + H(+). The enzyme catalyses L-aspartate + NAD(+) + H2O = oxaloacetate + NH4(+) + NADH + H(+). It participates in cofactor biosynthesis; NAD(+) biosynthesis; iminoaspartate from L-aspartate (dehydrogenase route): step 1/1. In terms of biological role, specifically catalyzes the NAD or NADP-dependent dehydrogenation of L-aspartate to iminoaspartate. The polypeptide is L-aspartate dehydrogenase (Pseudomonas aeruginosa (strain ATCC 15692 / DSM 22644 / CIP 104116 / JCM 14847 / LMG 12228 / 1C / PRS 101 / PAO1)).